The sequence spans 322 residues: tRNA dimethylallyltransferase (322 aa).

Residue 21 to 28 (GQTAVGKT) coordinates ATP. 23 to 28 (TAVGKT) lines the substrate pocket. The segment at 46–49 (DSGC) is interaction with substrate tRNA.

The protein belongs to the IPP transferase family. Monomer. It depends on Mg(2+) as a cofactor.

It carries out the reaction adenosine(37) in tRNA + dimethylallyl diphosphate = N(6)-dimethylallyladenosine(37) in tRNA + diphosphate. Catalyzes the transfer of a dimethylallyl group onto the adenine at position 37 in tRNAs that read codons beginning with uridine, leading to the formation of N6-(dimethylallyl)adenosine (i(6)A). The chain is tRNA dimethylallyltransferase from Wigglesworthia glossinidia brevipalpis.